The following is a 485-amino-acid chain: N-succinylglutamate 5-semialdehyde dehydrogenase (485 aa).

Position 220 to 225 (220 to 225) interacts with NAD(+); that stretch reads GSANTG. Residues Glu-243 and Cys-278 contribute to the active site.

This sequence belongs to the aldehyde dehydrogenase family. AstD subfamily.

It carries out the reaction N-succinyl-L-glutamate 5-semialdehyde + NAD(+) + H2O = N-succinyl-L-glutamate + NADH + 2 H(+). It participates in amino-acid degradation; L-arginine degradation via AST pathway; L-glutamate and succinate from L-arginine: step 4/5. Catalyzes the NAD-dependent reduction of succinylglutamate semialdehyde into succinylglutamate. The sequence is that of N-succinylglutamate 5-semialdehyde dehydrogenase from Vibrio vulnificus (strain YJ016).